The sequence spans 256 residues: tRNA (guanine-N(7)-)-methyltransferase (256 aa).

4 residues coordinate S-adenosyl-L-methionine: glutamate 85, glutamate 110, aspartate 137, and aspartate 159. Residue aspartate 159 is part of the active site. Positions 163 and 195 each coordinate substrate.

It belongs to the class I-like SAM-binding methyltransferase superfamily. TrmB family.

The catalysed reaction is guanosine(46) in tRNA + S-adenosyl-L-methionine = N(7)-methylguanosine(46) in tRNA + S-adenosyl-L-homocysteine. It participates in tRNA modification; N(7)-methylguanine-tRNA biosynthesis. In terms of biological role, catalyzes the formation of N(7)-methylguanine at position 46 (m7G46) in tRNA. This chain is tRNA (guanine-N(7)-)-methyltransferase, found in Rhodopseudomonas palustris (strain HaA2).